Consider the following 1530-residue polypeptide: Coiled-coil domain-containing protein 141 (1530 aa).

Residue Thr91 is modified to Phosphothreonine. Coiled-coil stretches lie at residues 642-706, 758-783, and 861-970; these read VKNE…EALM, VKEK…QDYE, and SNVS…KTSD. The segment at 1210-1241 is disordered; sequence SPDDISLPPLPGSPESPLAPSDMEVEEPVSSS. The Ig-like domain maps to 1409-1530; the sequence is PNFSRLLSNV…VSLMYWLLTQ (122 aa).

As to quaternary structure, interacts with DISC1. Interacts preferentially with phosphorylated forms of myosin regulatory light chain (MRLC). Interacts (via the N-terminal region) with HDAC6; inhibits the deacetylase activity of HDAC6. Interacts with KIBRA (via the C-terminal region); retains AMPAR in the cytosol after internalization. Post-translationally, ubiquitinated and degradated by the CDC20-APC/C pathway. During brain development, CDC20-APC/C complex degrades CCDC141 after centrosome translocation into the dilated area. CCDC141 is restabilized in the dilation until the centrosome enters the dilation, at which point it is once again immediately destabilized by CDC20-APC/C complex. The oscillatory regulation of CCDC141 protein is needed for proper cortical migration. Phosphorylation at Thr-91 by PLK1 affects CCDC141 degradation.

It localises to the cytoplasm. It is found in the cytoskeleton. Its subcellular location is the microtubule organizing center. The protein localises to the centrosome. Functionally, plays a critical role in cortical radial and GnRH neurons migration during brain development. Regulates cortical radial migration by negatively controlling the activity of histone deacetylase 6 (HDAC6) and promotes centrosome maturation. CAMDI is required for dilation formation of cortical neurons during radial migration. Plays a critical role in learning and memory performance through regulation of AMPA-selective glutamate receptors (AMPARs) cell surface expression in competition with KIBRA. The protein is Coiled-coil domain-containing protein 141 (CCDC141) of Homo sapiens (Human).